The following is a 136-amino-acid chain: Holo-[acyl-carrier-protein] synthase (136 aa).

2 residues coordinate Mg(2+): D8 and E57.

Belongs to the P-Pant transferase superfamily. AcpS family. The cofactor is Mg(2+).

The protein resides in the cytoplasm. It carries out the reaction apo-[ACP] + CoA = holo-[ACP] + adenosine 3',5'-bisphosphate + H(+). In terms of biological role, transfers the 4'-phosphopantetheine moiety from coenzyme A to a Ser of acyl-carrier-protein. The chain is Holo-[acyl-carrier-protein] synthase from Azorhizobium caulinodans (strain ATCC 43989 / DSM 5975 / JCM 20966 / LMG 6465 / NBRC 14845 / NCIMB 13405 / ORS 571).